A 118-amino-acid chain; its full sequence is Large ribosomal subunit protein bL19 (118 aa).

This sequence belongs to the bacterial ribosomal protein bL19 family.

In terms of biological role, this protein is located at the 30S-50S ribosomal subunit interface and may play a role in the structure and function of the aminoacyl-tRNA binding site. The chain is Large ribosomal subunit protein bL19 from Campylobacter lari (strain RM2100 / D67 / ATCC BAA-1060).